A 550-amino-acid chain; its full sequence is MLEKSLLLVTLLFALCSANLFGNNSYVYYYQSAFRPPNGWHLHGGAYEVVNVSTESSNAGTTECTAGAIYWSKNFSAASVAMTAPQNGMLWSTAQFCTAHCNFTDFVVFVTHCYKSASGSCPLTGLIPQYHIRISAMKNSSLFYNLTVAVTKYPRFKSLQCVNNMTSVYLNGDLVFTSNETKDVSAAGVHFKAGGPITYKVMREVKALAYFVNGTAQDVILCDGSPTGLLACQYNTGNFSDGFYPFTNSSLVKEKFIVYRESSVNTTLELTNFTFSNVSNANPNTGGVHTIQLYQTSTAQSGHYNFNFSFLSSFTYKESDYMYGSYHPSCKFRLETINNGLWFNSLSVSLGYGPIQGGCKQSVFQNRATCCYAYSYNGPPLCKGVYRGELTKSFECGLLVFVTKTDGSRIQTRNEPFTLTQHNYNNITLDRCVEYNIYGRVGQGFITNVTNYAINYNYLADGGMAILDTSGAIDIFVVQGEYGLNYYKVNPCEDVNQQFVVSGGKLVGILTSRNETGSQPLENQFYIKIINGTRRSRRSITGNVTNCPYV.

Positions methionine 1–alanine 18 are cleaved as a signal peptide. At asparagine 19 to valine 550 the chain is on the extracellular side. Residues asparagine 23, asparagine 74, asparagine 102, asparagine 139, asparagine 145, asparagine 164, asparagine 179, asparagine 213, asparagine 238, asparagine 248, asparagine 265, asparagine 272, asparagine 277, asparagine 307, asparagine 426, asparagine 448, asparagine 514, asparagine 531, and asparagine 543 are each glycosylated (N-linked (GlcNAc...) asparagine; by host).

This sequence belongs to the coronaviruses spike protein family. As to quaternary structure, homotrimer; each monomer consists of a S1 and a S2 subunit. The resulting peplomers protrude from the virus surface as spikes. Specific enzymatic cleavages in vivo yield mature proteins. The precursor is processed into S1 and S2 by host cell furin or furin-like protease to yield the mature S1 and S2 proteins. The cleavage site between S1 and S2 requires the optimal sequence [KR]-X-[KR]-R. Cleavage is not necessary for virus-cell fusion.

Its subcellular location is the virion membrane. The protein localises to the host endoplasmic reticulum-Golgi intermediate compartment membrane. Its function is as follows. S1 attaches the virion to the cell membrane by interacting with cell receptors, initiating the infection. Functionally, S2 is a class I viral fusion protein. Under the current model, the protein has at least 3 conformational states: pre-fusion native state, pre-hairpin intermediate state, and post-fusion hairpin state. During viral and target cell membrane fusion, the coiled coil regions (heptad repeats) assume a trimer-of-hairpins structure, positioning the fusion peptide in close proximity to the C-terminal region of the ectodomain. The formation of this structure appears to drive apposition and subsequent fusion of viral and target cell membranes. The chain is Spike glycoprotein (S) from Avian infectious bronchitis virus (strain D3896) (IBV).